The sequence spans 67 residues: Large ribosomal subunit protein uL29 (67 aa).

It belongs to the universal ribosomal protein uL29 family.

The polypeptide is Large ribosomal subunit protein uL29 (Moorella thermoacetica (strain ATCC 39073 / JCM 9320)).